A 145-amino-acid polypeptide reads, in one-letter code: Basic phospholipase A2 cL038 (145 aa).

Residues 1-21 form the signal peptide; it reads MYPAHLLVLLAVCVSLLGASA. Positions 22-27 are excised as a propeptide; it reads IPPLPL. Intrachain disulfides connect C38–C98, C54–C144, C56–C72, C71–C125, C78–C118, C87–C111, and C105–C116. Ca(2+) is bound by residues Y55, G57, and G59. H75 is an active-site residue. D76 contacts Ca(2+). D119 is an active-site residue.

The protein belongs to the phospholipase A2 family. Group I subfamily. D49 sub-subfamily. The cofactor is Ca(2+). In terms of tissue distribution, expressed by the venom gland.

Its subcellular location is the secreted. It catalyses the reaction a 1,2-diacyl-sn-glycero-3-phosphocholine + H2O = a 1-acyl-sn-glycero-3-phosphocholine + a fatty acid + H(+). PLA2 catalyzes the calcium-dependent hydrolysis of the 2-acyl groups in 3-sn-phosphoglycerides. The chain is Basic phospholipase A2 cL038 from Laticauda semifasciata (Black-banded sea krait).